A 764-amino-acid chain; its full sequence is Calpain-like protease palB/RIM13 (764 aa).

The region spanning G95–P368 is the Calpain catalytic domain. Active-site residues include C165, H318, and N336.

The protein belongs to the peptidase C2 family. PalB/RIM13 subfamily.

Its function is as follows. Required for the proteolytic cleavage of the transcription factor RIM101 in response to alkaline ambient pH. The polypeptide is Calpain-like protease palB/RIM13 (Debaryomyces hansenii (strain ATCC 36239 / CBS 767 / BCRC 21394 / JCM 1990 / NBRC 0083 / IGC 2968) (Yeast)).